A 343-amino-acid polypeptide reads, in one-letter code: UDP-3-O-acylglucosamine N-acyltransferase (343 aa).

Catalysis depends on histidine 237, which acts as the Proton acceptor.

This sequence belongs to the transferase hexapeptide repeat family. LpxD subfamily. In terms of assembly, homotrimer.

It catalyses the reaction a UDP-3-O-[(3R)-3-hydroxyacyl]-alpha-D-glucosamine + a (3R)-hydroxyacyl-[ACP] = a UDP-2-N,3-O-bis[(3R)-3-hydroxyacyl]-alpha-D-glucosamine + holo-[ACP] + H(+). It functions in the pathway bacterial outer membrane biogenesis; LPS lipid A biosynthesis. In terms of biological role, catalyzes the N-acylation of UDP-3-O-acylglucosamine using 3-hydroxyacyl-ACP as the acyl donor. Is involved in the biosynthesis of lipid A, a phosphorylated glycolipid that anchors the lipopolysaccharide to the outer membrane of the cell. The polypeptide is UDP-3-O-acylglucosamine N-acyltransferase (Synechococcus sp. (strain JA-3-3Ab) (Cyanobacteria bacterium Yellowstone A-Prime)).